The sequence spans 74 residues: Toxin Td6 (74 aa).

The N-terminal stretch at 1–8 is a signal peptide; that stretch reads IGMIVECE. The LCN-type CS-alpha/beta domain occupies 9 to 71; that stretch reads KEGYLMEANG…IWDSATNTCG (63 aa). Intrachain disulfides connect cysteine 19-cysteine 70, cysteine 23-cysteine 45, cysteine 31-cysteine 51, and cysteine 35-cysteine 53. Position 72 is an arginine amide (arginine 72).

This sequence belongs to the long (4 C-C) scorpion toxin superfamily. Sodium channel inhibitor family. Beta subfamily. As to expression, expressed by the venom gland.

Its subcellular location is the secreted. In terms of biological role, beta toxins bind voltage-independently at site-4 of sodium channels (Nav) and shift the voltage of activation toward more negative potentials thereby affecting sodium channel activation and promoting spontaneous and repetitive firing. The polypeptide is Toxin Td6 (Tityus discrepans (Venezuelan scorpion)).